Here is a 265-residue protein sequence, read N- to C-terminus: DNA repair protein RecO (265 aa).

It belongs to the RecO family.

Functionally, involved in DNA repair and RecF pathway recombination. The protein is DNA repair protein RecO of Mycobacterium ulcerans (strain Agy99).